Here is a 409-residue protein sequence, read N- to C-terminus: MKYITVLGSTGSIGTQTLEIVRELPNKFKVVALSAGRNIDLLTEQVSQHKPEVIAIDDENLLTDLKNNINNLGISNPPIVLGGREAINSVAAWDSADTVITGIVGCAGLIPTMSAIKASKNIALANKETLIAAGSVVIPALKENKSRLLPADSEHSAIFQCIQGLPNYENADFVTGQIPNGLKAIHLTASGGAFRDWAVEDLKNVTVEDATSHPNWSMGRKITVDSATLMNKGLEVIEAHYLFGTPYQNIEIVIHPQSIIHSMIEMEDSSVLAQLGWPDMKLPILYAMSWPERFRTNWKRFNLTEIGQLTFKKPDEVKYPCMGLAYSAGKCSGTMPAVLNAANEMAVDQFLKEKISFQEIPTFINKTCEAHINKLNLNPNLEDILEVDNWARIFVQEEIKKGKKYINVE.

Residues threonine 10, glycine 11, serine 12, isoleucine 13, glycine 36, arginine 37, asparagine 38, and asparagine 126 each coordinate NADPH. A 1-deoxy-D-xylulose 5-phosphate-binding site is contributed by lysine 127. Residue glutamate 128 coordinates NADPH. Aspartate 152 lines the Mn(2+) pocket. 4 residues coordinate 1-deoxy-D-xylulose 5-phosphate: serine 153, glutamate 154, serine 190, and histidine 213. A Mn(2+)-binding site is contributed by glutamate 154. Glycine 219 serves as a coordination point for NADPH. Residues serine 226, asparagine 231, lysine 232, and glutamate 235 each contribute to the 1-deoxy-D-xylulose 5-phosphate site. Glutamate 235 contributes to the Mn(2+) binding site.

It belongs to the DXR family. It depends on Mg(2+) as a cofactor. The cofactor is Mn(2+).

It carries out the reaction 2-C-methyl-D-erythritol 4-phosphate + NADP(+) = 1-deoxy-D-xylulose 5-phosphate + NADPH + H(+). Its pathway is isoprenoid biosynthesis; isopentenyl diphosphate biosynthesis via DXP pathway; isopentenyl diphosphate from 1-deoxy-D-xylulose 5-phosphate: step 1/6. In terms of biological role, catalyzes the NADPH-dependent rearrangement and reduction of 1-deoxy-D-xylulose-5-phosphate (DXP) to 2-C-methyl-D-erythritol 4-phosphate (MEP). This chain is 1-deoxy-D-xylulose 5-phosphate reductoisomerase, found in Prochlorococcus marinus (strain MIT 9515).